The following is a 477-amino-acid chain: NADH-quinone oxidoreductase subunit N (477 aa).

13 helical membrane-spanning segments follow: residues 7–27 (VLAH…LILI), 37–57 (GPMT…LVLG), 77–97 (FMKV…QTYL), 109–129 (ILIL…GLIA), 162–182 (FVLG…IYGF), 201–221 (LGVV…MSTV), 233–253 (GAPT…AIAI), 272–292 (IIVF…IGQT), 297–317 (LMAY…AAGT), 323–343 (GVLA…AAIL), 369–389 (AFFL…AGFF), 402–424 (HLYP…YLRI), and 446–466 (AVLI…GSFV).

The protein belongs to the complex I subunit 2 family. As to quaternary structure, NDH-1 is composed of 14 different subunits. Subunits NuoA, H, J, K, L, M, N constitute the membrane sector of the complex.

It is found in the cell inner membrane. The enzyme catalyses a quinone + NADH + 5 H(+)(in) = a quinol + NAD(+) + 4 H(+)(out). In terms of biological role, NDH-1 shuttles electrons from NADH, via FMN and iron-sulfur (Fe-S) centers, to quinones in the respiratory chain. The immediate electron acceptor for the enzyme in this species is believed to be ubiquinone. Couples the redox reaction to proton translocation (for every two electrons transferred, four hydrogen ions are translocated across the cytoplasmic membrane), and thus conserves the redox energy in a proton gradient. The chain is NADH-quinone oxidoreductase subunit N from Beijerinckia indica subsp. indica (strain ATCC 9039 / DSM 1715 / NCIMB 8712).